The primary structure comprises 213 residues: AN1-type zinc finger protein 5 (213 aa).

The segment at 8-42 adopts an A20-type zinc-finger fold; the sequence is TPGPMLCSTGCGFYGNPRTNGMCSVCYKEHLQRQQ. Cys-14, Cys-18, Cys-30, and Cys-33 together coordinate Zn(2+). Residues 39-149 are disordered; it reads QRQQNSGRMS…EEKAPELPKP (111 aa). The segment covering 40-75 has biased composition (polar residues); sequence RQQNSGRMSPMGTASGSNSPTSDSASVQRADTSLNN. Residues Ser-48 and Ser-58 each carry the phosphoserine modification. Residues 120–138 show a composition bias toward low complexity; it reads SEPVVTQPSPSVSQPSTSQ. The segment covering 139–148 has biased composition (basic and acidic residues); that stretch reads SEEKAPELPK. The segment at 148-194 adopts an AN1-type zinc-finger fold; that stretch reads KPKKNRCFMCRKKVGLTGFDCRCGNLFCGLHRYSDKHNCPYDYKAEA. Residues Cys-154, Cys-157, Cys-168, Cys-170, Cys-175, His-178, His-184, and Cys-186 each coordinate Zn(2+). The residue at position 209 (Lys-209) is an N6-acetyllysine.

As to quaternary structure, interacts with ubiquitin and polyubiquitinated proteins. Identified in a heterotrimeric complex with ubiquitin and SQSTM1, where ZFAND5 and SQSTM1 both interact with the same ubiquitin molecule. Homooligomer and/or heterooligomer. Interacts (via A20-type domain) with IKBKG and RIPK1 and with TRAF6 (via AN1-type domain). As to expression, highly expressed in skeletal muscle. Expressed in fetal cochlea. Also expressed in infant brain, fetal heart, pancreatic islet, melanocyte, pineal gland, placenta, corneal stroma, and parathyroid tumor. Weakly expressed or undetectable in adult brain, heart, colon, thymus, spleen, kidney, liver, small intestine, placenta, lung and peripheral blood leukocytes. Expressed in rhabdomyosarcoma RD cells (at protein level).

The protein resides in the cytoplasm. Functionally, involved in protein degradation via the ubiquitin-proteasome system. May act by anchoring ubiquitinated proteins to the proteasome. Plays a role in ubiquitin-mediated protein degradation during muscle atrophy. Plays a role in the regulation of NF-kappa-B activation and apoptosis. Inhibits NF-kappa-B activation triggered by overexpression of RIPK1 and TRAF6 but not of RELA. Also inhibits tumor necrosis factor (TNF), IL-1 and TLR4-induced NF-kappa-B activation in a dose-dependent manner. Overexpression sensitizes cells to TNF-induced apoptosis. Is a potent inhibitory factor for osteoclast differentiation. The polypeptide is AN1-type zinc finger protein 5 (ZFAND5) (Homo sapiens (Human)).